Reading from the N-terminus, the 218-residue chain is Probable signal peptidase I-2 (218 aa).

Residues 1–26 (MTENIVRETSKKKESPPENTWLELGK) are Cytoplasmic-facing. Residues 27–43 (TMVTAVILAIGIRTFVA) form a helical membrane-spanning segment. Residues 44 to 218 (EARYIPSSSM…ISPQTVPESR (175 aa)) are Periplasmic-facing. Catalysis depends on residues S52 and K100.

This sequence belongs to the peptidase S26 family.

The protein resides in the cell membrane. It catalyses the reaction Cleavage of hydrophobic, N-terminal signal or leader sequences from secreted and periplasmic proteins.. This Synechocystis sp. (strain ATCC 27184 / PCC 6803 / Kazusa) protein is Probable signal peptidase I-2 (lepB2).